We begin with the raw amino-acid sequence, 196 residues long: Peptidyl-tRNA hydrolase (196 aa).

Tyr14 is a tRNA binding site. His19 functions as the Proton acceptor in the catalytic mechanism. Positions 64, 66, and 112 each coordinate tRNA.

This sequence belongs to the PTH family. As to quaternary structure, monomer.

The protein localises to the cytoplasm. The catalysed reaction is an N-acyl-L-alpha-aminoacyl-tRNA + H2O = an N-acyl-L-amino acid + a tRNA + H(+). In terms of biological role, hydrolyzes ribosome-free peptidyl-tRNAs (with 1 or more amino acids incorporated), which drop off the ribosome during protein synthesis, or as a result of ribosome stalling. Its function is as follows. Catalyzes the release of premature peptidyl moieties from peptidyl-tRNA molecules trapped in stalled 50S ribosomal subunits, and thus maintains levels of free tRNAs and 50S ribosomes. This Methylocella silvestris (strain DSM 15510 / CIP 108128 / LMG 27833 / NCIMB 13906 / BL2) protein is Peptidyl-tRNA hydrolase.